The primary structure comprises 87 residues: Mitochondrial import inner membrane translocase subunit TIM9 (87 aa).

The Twin CX3C motif motif lies at 35–59 (CFTDCVNDFTSSKLTSKEESCILKC). 2 disulfides stabilise this stretch: cysteine 35–cysteine 59 and cysteine 39–cysteine 55.

This sequence belongs to the small Tim family. In terms of assembly, heterohexamer; composed of 3 copies of TIM9 and 3 copies of TIM10, named soluble 70 kDa complex. Associates with the TIM22 complex, whose core is composed of TIM22 and TIM54. Interacts with the transmembrane regions of multi-pass transmembrane proteins in transit.

The protein localises to the mitochondrion inner membrane. Functionally, mitochondrial intermembrane chaperone that participates in the import and insertion of multi-pass transmembrane proteins into the mitochondrial inner membrane. Also required for the transfer of beta-barrel precursors from the TOM complex to the sorting and assembly machinery (SAM complex) of the outer membrane. Acts as a chaperone-like protein that protects the hydrophobic precursors from aggregation and guide them through the mitochondrial intermembrane space. The chain is Mitochondrial import inner membrane translocase subunit TIM9 (TIM9) from Candida glabrata (strain ATCC 2001 / BCRC 20586 / JCM 3761 / NBRC 0622 / NRRL Y-65 / CBS 138) (Yeast).